Reading from the N-terminus, the 204-residue chain is Venom allergen 5 (204 aa).

Disulfide bonds link Cys-4/Cys-17, Cys-8/Cys-101, Cys-26/Cys-94, and Cys-170/Cys-187. The SCP domain maps to 45–189 (LKEHNDFRQK…WHKHYLVCNY (145 aa)).

It belongs to the CRISP family. Venom allergen 5-like subfamily. Expressed by the venom gland.

It is found in the secreted. In terms of biological role, may have an ancestral function in the promotion of ovum fertilization by sperm. This is Venom allergen 5 from Vespula flavopilosa (Downy yellowjacket).